The primary structure comprises 325 residues: Cell division protein ZipA (325 aa).

The Periplasmic segment spans residues 1 to 5 (MQELR). A helical transmembrane segment spans residues 6–26 (LVLILVGALAIAALLFHGLWT). The Cytoplasmic portion of the chain corresponds to 27–325 (SRKETSSKFG…KQRVKVFCRK (299 aa)).

The protein belongs to the ZipA family. As to quaternary structure, interacts with FtsZ via their C-terminal domains.

Its subcellular location is the cell inner membrane. In terms of biological role, essential cell division protein that stabilizes the FtsZ protofilaments by cross-linking them and that serves as a cytoplasmic membrane anchor for the Z ring. Also required for the recruitment to the septal ring of downstream cell division proteins. The chain is Cell division protein ZipA from Aliivibrio fischeri (strain MJ11) (Vibrio fischeri).